The primary structure comprises 348 residues: Ion-translocating oxidoreductase complex subunit D (348 aa).

The Cytoplasmic segment spans residues 1 to 22; the sequence is MAFFIASSPHLRSKRSTADVMR. The next 2 helical transmembrane spans lie at 23 to 43 and 44 to 64; these read WVLV…GYGT and LIQL…IMLL. Over 65–71 the chain is Cytoplasmic; it reads RKRSPIS. A helical membrane pass occupies residues 72–91; that stretch reads ALRDYSAVVTAWLLAVAIPP. Over 92 to 94 the chain is Periplasmic; it reads LSP. A helical transmembrane segment spans residues 95 to 117; the sequence is WWVVVIGLIFAIVIAKHLYGGLG. Residues 118–125 lie on the Cytoplasmic side of the membrane; that stretch reads QNPFNPAM. Residues 126–146 form a helical membrane-spanning segment; it reads IAYVVLLISFPVQMTSWMAPI. The Periplasmic portion of the chain corresponds to 147–213; that stretch reads KLTAEPSSLV…ETLTQPQFSG (67 aa). The residue at position 187 (threonine 187) is an FMN phosphoryl threonine. The chain crosses the membrane as a helical span at residues 214 to 234; that stretch reads FAGIGWEWVNIAYLLGGLILL. At 235 to 242 the chain is on the cytoplasmic side; that stretch reads KLRIIRWH. A helical membrane pass occupies residues 243–263; the sequence is IPVAMLAGLVFTALLAQLFAP. The Periplasmic segment spans residues 264–265; that stretch reads GT. The chain crosses the membrane as a helical span at residues 266–286; it reads TASPMIHLLSGATMLGAFFIA. Residues 287–299 are Cytoplasmic-facing; sequence TDPVSASTTDKGR. 2 helical membrane-spanning segments follow: residues 300-320 and 321-341; these read LIYG…GGFP and DGVA…DYYT. At 342-348 the chain is on the cytoplasmic side; it reads KPRTYGH.

It belongs to the NqrB/RnfD family. The complex is composed of six subunits: RnfA, RnfB, RnfC, RnfD, RnfE and RnfG. Requires FMN as cofactor.

The protein localises to the cell inner membrane. Part of a membrane-bound complex that couples electron transfer with translocation of ions across the membrane. This chain is Ion-translocating oxidoreductase complex subunit D, found in Vibrio cholerae serotype O1 (strain ATCC 39541 / Classical Ogawa 395 / O395).